The chain runs to 1221 residues: A disintegrin and metalloproteinase with thrombospondin motifs 18 (1221 aa).

The signal sequence occupies residues 1–47 (MECALLLACAFPAAGSGPPRGLAGLGRVAKALQLCCLCCASVAAALA). Positions 48–284 (SDSSSGASGL…EYGSSGRPRR (237 aa)) are excised as a propeptide. N-linked (GlcNAc...) asparagine glycans are attached at residues N151 and N190. The Cysteine switch signature appears at 252-259 (HFCGRRKK). Position 254 (C254) interacts with Zn(2+). Residues 258 to 291 (KKYAPKPPTEDTYLRFDEYGSSGRPRRSAGKSQK) form a disordered region. A compositionally biased stretch (basic and acidic residues) spans 265–275 (PTEDTYLRFDE). In terms of domain architecture, Peptidase M12B spans 293–498 (LNVETLVVAD…PQAGCLVDEP (206 aa)). A glycan (N-linked (GlcNAc...) asparagine) is linked at N313. Disulfide bonds link C369–C420, C395–C402, C414–C493, C453–C477, C521–C546, C532–C553, C541–C572, C566–C577, C601–C638, C605–C643, and C616–C628. H436 is a binding site for Zn(2+). The active site involves E437. 2 residues coordinate Zn(2+): H440 and H446. In terms of domain architecture, Disintegrin spans 498–577 (PKQAGQYKYP…LSMWCRQGQC (80 aa)). The TSP type-1 1 domain maps to 589–644 (HGQWSAWSKWSECSRTCGGGVKFQERHCNNPKPQYGGLFCPGSSRIYQLCNINPCN). N-linked (GlcNAc...) asparagine glycosylation is found at N745, N838, and N909. Residues 750-876 (FYKGLYLNQH…TPPATKRPAY (127 aa)) are spacer. TSP type-1 domains follow at residues 931–990 (CPAY…NSHA), 991–1049 (CPPQ…GRCP), 1052–1116 (SRLQ…RACP), and 1123–1178 (MVAG…NFCP). The region spanning 1184–1221 (EDPSCVDFFNWCHLVPQHGVCNHKFYGKQCCKSCTRKI) is the PLAC domain.

Zn(2+) serves as cofactor. Post-translationally, the precursor is cleaved by a furin endopeptidase. Glycosylated. Can be O-fucosylated by POFUT2 on a serine or a threonine residue found within the consensus sequence C1-X(2)-(S/T)-C2-G of the TSP type-1 repeat domains where C1 and C2 are the first and second cysteine residue of the repeat, respectively. Fucosylated repeats can then be further glycosylated by the addition of a beta-1,3-glucose residue by the glucosyltransferase, B3GALTL. Fucosylation mediates the efficient secretion of ADAMTS family members. Can also be C-glycosylated with one or two mannose molecules on tryptophan residues within the consensus sequence W-X-X-W of the TPRs, and N-glycosylated. These other glycosylations can also facilitate secretion. As to expression, expressed in fetal lung, liver, and kidney and in adult brain, prostate, submaxillary gland, and endothelium.

The protein resides in the secreted. It localises to the extracellular space. Its subcellular location is the extracellular matrix. This is A disintegrin and metalloproteinase with thrombospondin motifs 18 (ADAMTS18) from Homo sapiens (Human).